The primary structure comprises 707 residues: Protein SGM1 (707 aa).

A compositionally biased stretch (basic and acidic residues) spans Met1–Leu11. Residues Met1–Ala52 are disordered. Position 2 is an N-acetylserine (Ser2). Low complexity predominate over residues Ser27 to Asn40. Positions Val122–Lys473 form a coiled coil. Ser151, Ser538, Ser549, Ser568, Ser571, Ser576, and Ser589 each carry phosphoserine. Residues Ser594–Met706 are a coiled coil.

This sequence belongs to the SGM1 family. As to quaternary structure, interacts with YPT6.

It localises to the golgi apparatus. Required for normal growth rate on galactose and mannose. This chain is Protein SGM1 (SGM1), found in Saccharomyces cerevisiae (strain ATCC 204508 / S288c) (Baker's yeast).